The chain runs to 130 residues: Probable 4-amino-4-deoxy-L-arabinose-phosphoundecaprenol flippase subunit ArnF (130 aa).

Over 1–4 (MRGY) the chain is Cytoplasmic. Residues 5–25 (AWGAASVLLVTLAQLLMKWGM) traverse the membrane as a helical segment. The Periplasmic portion of the chain corresponds to 26–47 (AQIPLMSFADVTLNLFMQYWLP). Residues 48 to 68 (LVVVSGGIFGYALSMLCWFFA) form a helical membrane-spanning segment. Residues 69 to 77 (LHHLPLNRA) are Cytoplasmic-facing. Residues 78-98 (YPLLSVSYALVYLAAVILPWF) form a helical membrane-spanning segment. A topological domain (periplasmic) is located at residue Asn-99. Residues 100 to 120 (ESATLLKTLGTLFILFGVWLI) form a helical membrane-spanning segment. Over 121–130 (NSQAKVKTPQ) the chain is Cytoplasmic.

This sequence belongs to the ArnF family. In terms of assembly, heterodimer of ArnE and ArnF.

The protein resides in the cell inner membrane. The protein operates within bacterial outer membrane biogenesis; lipopolysaccharide biosynthesis. In terms of biological role, translocates 4-amino-4-deoxy-L-arabinose-phosphoundecaprenol (alpha-L-Ara4N-phosphoundecaprenol) from the cytoplasmic to the periplasmic side of the inner membrane. The chain is Probable 4-amino-4-deoxy-L-arabinose-phosphoundecaprenol flippase subunit ArnF from Serratia proteamaculans (strain 568).